Consider the following 113-residue polypeptide: Putative pterin-4-alpha-carbinolamine dehydratase (113 aa).

It belongs to the pterin-4-alpha-carbinolamine dehydratase family.

It carries out the reaction (4aS,6R)-4a-hydroxy-L-erythro-5,6,7,8-tetrahydrobiopterin = (6R)-L-erythro-6,7-dihydrobiopterin + H2O. This is Putative pterin-4-alpha-carbinolamine dehydratase from Legionella pneumophila (strain Paris).